Consider the following 123-residue polypeptide: Nitrogenase-stabilizing/protective protein NifW (123 aa).

The protein belongs to the NifW family. In terms of assembly, homotrimer; associates with NifD.

Functionally, may protect the nitrogenase Fe-Mo protein from oxidative damage. This chain is Nitrogenase-stabilizing/protective protein NifW, found in Rhodopseudomonas palustris (strain HaA2).